Here is a 362-residue protein sequence, read N- to C-terminus: Histidine protein methyltransferase 1 homolog (362 aa).

The interval 18–88 (TSLDDGTCVL…EACKHQPSWK (71 aa)) is disordered. Positions 30 to 51 (QKGKQDKRQSTERPGLPRDHSW) are enriched in basic and acidic residues. The span at 52–65 (KCSSLGNAASSEDT) shows a compositional bias: polar residues. 2 positions are modified to phosphoserine: serine 62 and serine 67. Basic and acidic residues predominate over residues 73–82 (DRSDDPEACK). A Tele-methylhistidine modification is found at histidine 144. Residues 158 to 162 (IWECT), glycine 185, and 206 to 208 (QDY) each bind S-adenosyl-L-methionine. The Nuclear localization signal signature appears at 237–243 (PDGKRQR). S-adenosyl-L-methionine contacts are provided by residues 259–261 (GEW) and serine 283.

The protein belongs to the methyltransferase superfamily. METTL18 family. As to quaternary structure, interacts with GRWD1 and members of the heat shock protein 90 and 70 families; these proteins may possibly be methylation substrates for the enzyme. Post-translationally, monomethylated at His-144 through automethylation. Automethylation at His-144 positively regulates the methyltransferase activity toward RPL3. Probably methylated on other residues.

The protein localises to the cytoplasm. It localises to the cytosol. The protein resides in the nucleus. Its subcellular location is the nucleolus. It carries out the reaction L-histidyl-[protein] + S-adenosyl-L-methionine = N(tele)-methyl-L-histidyl-[protein] + S-adenosyl-L-homocysteine + H(+). Functionally, protein-L-histidine N-tele-methyltransferase that specifically monomethylates RPL3, thereby regulating translation elongation. Histidine methylation of RPL3 regulates translation elongation by slowing ribosome traversal on tyrosine codons: slower elongation provides enough time for proper folding of synthesized proteins and prevents cellular aggregation of tyrosine-rich proteins. The polypeptide is Histidine protein methyltransferase 1 homolog (Mus musculus (Mouse)).